The sequence spans 470 residues: Putative dipeptidase TSTA_079200 (470 aa).

The chain crosses the membrane as a helical span at residues 40–60 (AWLFGLGTLGIILASVLLNPF). Residues His-92 and Asp-94 each coordinate Zn(2+). A disulfide bridge connects residues Cys-143 and Cys-237. N-linked (GlcNAc...) asparagine glycosylation occurs at Asn-188. Glu-208 serves as a coordination point for Zn(2+). A substrate-binding site is contributed by His-235. The Zn(2+) site is built by His-279 and His-300. Substrate-binding residues include Arg-311 and Asp-371.

The protein belongs to the metallo-dependent hydrolases superfamily. Peptidase M19 family. Zn(2+) serves as cofactor.

It is found in the membrane. It catalyses the reaction an L-aminoacyl-L-amino acid + H2O = 2 an L-alpha-amino acid. In terms of biological role, hydrolyzes a wide range of dipeptides. The sequence is that of Putative dipeptidase TSTA_079200 from Talaromyces stipitatus (strain ATCC 10500 / CBS 375.48 / QM 6759 / NRRL 1006) (Penicillium stipitatum).